The chain runs to 99 residues: Large ribosomal subunit protein bL27 (99 aa).

Residues 1–10 constitute a propeptide that is removed on maturation; sequence MKLIFDIQLF.

The protein belongs to the bacterial ribosomal protein bL27 family. Post-translationally, the N-terminus is cleaved by ribosomal processing cysteine protease Prp.

In Caldicellulosiruptor saccharolyticus (strain ATCC 43494 / DSM 8903 / Tp8T 6331), this protein is Large ribosomal subunit protein bL27.